A 179-amino-acid polypeptide reads, in one-letter code: Large ribosomal subunit protein uL5 (179 aa).

Belongs to the universal ribosomal protein uL5 family. Part of the 50S ribosomal subunit; part of the 5S rRNA/L5/L18/L25 subcomplex. Contacts the 5S rRNA and the P site tRNA. Forms a bridge to the 30S subunit in the 70S ribosome.

Functionally, this is one of the proteins that bind and probably mediate the attachment of the 5S RNA into the large ribosomal subunit, where it forms part of the central protuberance. In the 70S ribosome it contacts protein S13 of the 30S subunit (bridge B1b), connecting the 2 subunits; this bridge is implicated in subunit movement. Contacts the P site tRNA; the 5S rRNA and some of its associated proteins might help stabilize positioning of ribosome-bound tRNAs. In Anoxybacillus flavithermus (strain DSM 21510 / WK1), this protein is Large ribosomal subunit protein uL5.